Reading from the N-terminus, the 571-residue chain is Proline--tRNA ligase (571 aa).

This sequence belongs to the class-II aminoacyl-tRNA synthetase family. ProS type 1 subfamily. Homodimer.

The protein localises to the cytoplasm. The enzyme catalyses tRNA(Pro) + L-proline + ATP = L-prolyl-tRNA(Pro) + AMP + diphosphate. Functionally, catalyzes the attachment of proline to tRNA(Pro) in a two-step reaction: proline is first activated by ATP to form Pro-AMP and then transferred to the acceptor end of tRNA(Pro). As ProRS can inadvertently accommodate and process non-cognate amino acids such as alanine and cysteine, to avoid such errors it has two additional distinct editing activities against alanine. One activity is designated as 'pretransfer' editing and involves the tRNA(Pro)-independent hydrolysis of activated Ala-AMP. The other activity is designated 'posttransfer' editing and involves deacylation of mischarged Ala-tRNA(Pro). The misacylated Cys-tRNA(Pro) is not edited by ProRS. The protein is Proline--tRNA ligase of Pseudomonas aeruginosa (strain LESB58).